Here is a 331-residue protein sequence, read N- to C-terminus: NADH-quinone oxidoreductase subunit H (331 aa).

8 helical membrane-spanning segments follow: residues 13–33, 80–100, 113–133, 159–179, 183–203, 249–269, 273–293, and 311–331; these read FLISSATVIFLVLNIAAVLTL, WVFLAAPIAMFLPAAAVWLVI, IGLVYFFAITSIGALGVIMAG, LILSLLGVAMLTGSLSMVDIV, AGGFWNWIIWPQLPMFLAFFV, VMSAVASTLFLGGWQPPLPFL, VFNWLWLGIKTTLLIFVFQWI, and KILVPVTILWLFVTAGAMLVI.

It belongs to the complex I subunit 1 family. As to quaternary structure, NDH-1 is composed of 14 different subunits. Subunits NuoA, H, J, K, L, M, N constitute the membrane sector of the complex.

The protein localises to the cell membrane. It catalyses the reaction a quinone + NADH + 5 H(+)(in) = a quinol + NAD(+) + 4 H(+)(out). NDH-1 shuttles electrons from NADH, via FMN and iron-sulfur (Fe-S) centers, to quinones in the respiratory chain. The immediate electron acceptor for the enzyme in this species is believed to be ubiquinone. Couples the redox reaction to proton translocation (for every two electrons transferred, four hydrogen ions are translocated across the cytoplasmic membrane), and thus conserves the redox energy in a proton gradient. This subunit may bind ubiquinone. This Rubrobacter xylanophilus (strain DSM 9941 / JCM 11954 / NBRC 16129 / PRD-1) protein is NADH-quinone oxidoreductase subunit H.